The following is a 522-amino-acid chain: uncharacterized protein (522 aa).

Positions 1-11 are enriched in low complexity; that stretch reads MSSITSRVSSR. The disordered stretch occupies residues 1–20; that stretch reads MSSITSRVSSRSSHELTEKK. The next 12 helical transmembrane spans lie at 69-89, 116-136, 141-161, 173-193, 204-224, 236-256, 303-323, 338-358, 367-387, 396-416, 428-448, and 462-482; these read VLWK…MIQY, SMTT…AILM, LSYF…LMAA, FLAG…TAMW, LCWY…SYGL, YVFI…VFIP, VIMI…GVFS, AVLN…SGVL, LLIG…IWKI, LVGV…LSLI, VTSA…PQLF, and AMIV…GYYI.

Belongs to the major facilitator superfamily. Allantoate permease family.

The protein localises to the endoplasmic reticulum. The protein resides in the membrane. This is an uncharacterized protein from Schizosaccharomyces pombe (strain 972 / ATCC 24843) (Fission yeast).